We begin with the raw amino-acid sequence, 515 residues long: Cytochrome P450 1A2 (515 aa).

An O-linked (GlcNAc) serine glycan is attached at Ser-69. Phe-226 lines the substrate pocket. Residue Cys-458 participates in heme binding.

It belongs to the cytochrome P450 family. As to quaternary structure, interacts with PGRMC1; the interaction requires PGRMC1 homodimerization. Heme is required as a cofactor.

It is found in the endoplasmic reticulum membrane. Its subcellular location is the microsome membrane. It carries out the reaction an organic molecule + reduced [NADPH--hemoprotein reductase] + O2 = an alcohol + oxidized [NADPH--hemoprotein reductase] + H2O + H(+). The catalysed reaction is 17beta-estradiol + reduced [NADPH--hemoprotein reductase] + O2 = 2-hydroxy-17beta-estradiol + oxidized [NADPH--hemoprotein reductase] + H2O + H(+). It catalyses the reaction 17beta-estradiol + reduced [NADPH--hemoprotein reductase] + O2 = 4-hydroxy-17beta-estradiol + oxidized [NADPH--hemoprotein reductase] + H2O + H(+). The enzyme catalyses estrone + reduced [NADPH--hemoprotein reductase] + O2 = 2-hydroxyestrone + oxidized [NADPH--hemoprotein reductase] + H2O + H(+). It carries out the reaction estrone + reduced [NADPH--hemoprotein reductase] + O2 = 4-hydroxyestrone + oxidized [NADPH--hemoprotein reductase] + H2O + H(+). The catalysed reaction is cholesterol + reduced [NADPH--hemoprotein reductase] + O2 = 25-hydroxycholesterol + oxidized [NADPH--hemoprotein reductase] + H2O + H(+). It catalyses the reaction all-trans-retinol + reduced [NADPH--hemoprotein reductase] + O2 = all-trans-retinal + oxidized [NADPH--hemoprotein reductase] + 2 H2O + H(+). The enzyme catalyses all-trans-retinal + reduced [NADPH--hemoprotein reductase] + O2 = all-trans-retinoate + oxidized [NADPH--hemoprotein reductase] + H2O + 2 H(+). It carries out the reaction (5Z,8Z,11Z,14Z)-eicosatetraenoate + reduced [NADPH--hemoprotein reductase] + O2 = (14R,15S)-epoxy-(5Z,8Z,11Z)-eicosatrienoate + oxidized [NADPH--hemoprotein reductase] + H2O + H(+). The catalysed reaction is (5Z,8Z,11Z,14Z)-eicosatetraenoate + reduced [NADPH--hemoprotein reductase] + O2 = (14S,15R)-epoxy-(5Z,8Z,11Z)-eicosatrienoate + oxidized [NADPH--hemoprotein reductase] + H2O + H(+). It catalyses the reaction (5Z,8Z,11Z,14Z,17Z)-eicosapentaenoate + reduced [NADPH--hemoprotein reductase] + O2 = (17R,18S)-epoxy-(5Z,8Z,11Z,14Z)-eicosatetraenoate + oxidized [NADPH--hemoprotein reductase] + H2O + H(+). The enzyme catalyses (4Z,7Z,10Z,13Z,16Z,19Z)-docosahexaenoate + reduced [NADPH--hemoprotein reductase] + O2 = (19R,20S)-epoxy-(4Z,7Z,10Z,13Z,16Z)-docosapentaenoate + oxidized [NADPH--hemoprotein reductase] + H2O + H(+). It carries out the reaction (5S)-hydroperoxy-(6E,8Z,11Z,14Z)-eicosatetraenoate = 5-oxo-(6E,8Z,11Z,14Z)-eicosatetraenoate + H2O. The catalysed reaction is (12S)-hydroperoxy-(5Z,8Z,10E,14Z)-eicosatetraenoate = 12-oxo-(5Z,8Z,10E,14Z)-eicosatetraenoate + H2O. It catalyses the reaction (15S)-hydroperoxy-(5Z,8Z,11Z,13E)-eicosatetraenoate = 15-oxo-(5Z,8Z,11Z,13E)-eicosatetraenoate + H2O. The enzyme catalyses (13S)-hydroperoxy-(9Z,11E)-octadecadienoate = 13-oxo-(9Z,11E)-octadecadienoate + H2O. It carries out the reaction (5Z,8Z,11Z,14Z)-eicosatetraenoate + reduced [NADPH--hemoprotein reductase] + O2 = 13-hydroxy-(5Z,8Z,11Z,14Z)-eicosatetraenoate + oxidized [NADPH--hemoprotein reductase] + H2O + H(+). The catalysed reaction is (5Z,8Z,11Z,14Z)-eicosatetraenoate + reduced [NADPH--hemoprotein reductase] + O2 = 19-hydroxy-(5Z,8Z,11Z,14Z)-eicosatetraenoate + oxidized [NADPH--hemoprotein reductase] + H2O + H(+). It catalyses the reaction (9Z,12Z)-octadecadienoate + reduced [NADPH--hemoprotein reductase] + O2 = 11-hydroxy-(9Z,12Z)-octadecadienoate + oxidized [NADPH--hemoprotein reductase] + H2O + H(+). It participates in cofactor metabolism; retinol metabolism. The protein operates within steroid metabolism; cholesterol metabolism. Its pathway is lipid metabolism; arachidonate metabolism. A cytochrome P450 monooxygenase involved in the metabolism of various endogenous substrates, including fatty acids, steroid hormones and vitamins. Mechanistically, uses molecular oxygen inserting one oxygen atom into a substrate, and reducing the second into a water molecule, with two electrons provided by NADPH via cytochrome P450 reductase (NADPH--hemoprotein reductase). Catalyzes the hydroxylation of carbon-hydrogen bonds. Exhibits high catalytic activity for the formation of hydroxyestrogens from estrone (E1) and 17beta-estradiol (E2), namely 2-hydroxy E1 and E2. Metabolizes cholesterol toward 25-hydroxycholesterol, a physiological regulator of cellular cholesterol homeostasis. May act as a major enzyme for all-trans retinoic acid biosynthesis in the liver. Catalyzes two successive oxidative transformation of all-trans retinol to all-trans retinal and then to the active form all-trans retinoic acid. Primarily catalyzes stereoselective epoxidation of the last double bond of polyunsaturated fatty acids (PUFA), displaying a strong preference for the (R,S) stereoisomer. Catalyzes bisallylic hydroxylation and omega-1 hydroxylation of PUFA. May also participate in eicosanoids metabolism by converting hydroperoxide species into oxo metabolites (lipoxygenase-like reaction, NADPH-independent). Plays a role in the oxidative metabolism of xenobiotics. Catalyzes the N-hydroxylation of heterocyclic amines and the O-deethylation of phenacetin. Metabolizes caffeine via N3-demethylation. In Cavia porcellus (Guinea pig), this protein is Cytochrome P450 1A2 (CYP1A2).